Here is a 698-residue protein sequence, read N- to C-terminus: Polyribonucleotide nucleotidyltransferase (698 aa).

Mg(2+) is bound by residues aspartate 485 and aspartate 491. Residues proline 552–isoleucine 611 form the KH domain. In terms of domain architecture, S1 motif spans glycine 621 to lysine 689.

It belongs to the polyribonucleotide nucleotidyltransferase family. As to quaternary structure, component of the RNA degradosome, which is a multiprotein complex involved in RNA processing and mRNA degradation. Mg(2+) is required as a cofactor.

The protein localises to the cytoplasm. The enzyme catalyses RNA(n+1) + phosphate = RNA(n) + a ribonucleoside 5'-diphosphate. Involved in mRNA degradation. Catalyzes the phosphorolysis of single-stranded polyribonucleotides processively in the 3'- to 5'-direction. In Shewanella denitrificans (strain OS217 / ATCC BAA-1090 / DSM 15013), this protein is Polyribonucleotide nucleotidyltransferase.